Reading from the N-terminus, the 949-residue chain is Isoleucine--tRNA ligase (949 aa).

The short motif at 58–68 (PYANGDIHIGH) is the 'HIGH' region element. L-isoleucyl-5'-AMP is bound at residue E567. A 'KMSKS' region motif is present at residues 608–612 (KMSKS). Position 611 (K611) interacts with ATP. Residues C912, C915, C932, and C935 each coordinate Zn(2+).

It belongs to the class-I aminoacyl-tRNA synthetase family. IleS type 1 subfamily. Monomer. It depends on Zn(2+) as a cofactor.

The protein resides in the cytoplasm. The enzyme catalyses tRNA(Ile) + L-isoleucine + ATP = L-isoleucyl-tRNA(Ile) + AMP + diphosphate. Its function is as follows. Catalyzes the attachment of isoleucine to tRNA(Ile). As IleRS can inadvertently accommodate and process structurally similar amino acids such as valine, to avoid such errors it has two additional distinct tRNA(Ile)-dependent editing activities. One activity is designated as 'pretransfer' editing and involves the hydrolysis of activated Val-AMP. The other activity is designated 'posttransfer' editing and involves deacylation of mischarged Val-tRNA(Ile). This Vibrio cholerae serotype O1 (strain ATCC 39315 / El Tor Inaba N16961) protein is Isoleucine--tRNA ligase.